We begin with the raw amino-acid sequence, 154 residues long: Cysteine-rich DPF motif domain-containing protein 1 (154 aa).

It belongs to the CDPF1 family.

In Drosophila melanogaster (Fruit fly), this protein is Cysteine-rich DPF motif domain-containing protein 1.